Consider the following 71-residue polypeptide: DNA-directed RNA polymerase subunit epsilon (71 aa).

It belongs to the RNA polymerase subunit epsilon family. In terms of assembly, monomer. RNAP is composed of a core of 2 alpha, a beta and a beta' subunit. The core is associated with a delta subunit, and at least one of epsilon or omega. When a sigma factor is associated with the core the holoenzyme is formed, which can initiate transcription.

It catalyses the reaction RNA(n) + a ribonucleoside 5'-triphosphate = RNA(n+1) + diphosphate. In terms of biological role, a non-essential component of RNA polymerase (RNAP). Has a similar structure to bacteriophage T7 protein Gp2 (AC P03704), which is known to bind to RNAP in the DNA binding-cleft. Unlike Gp2 however, this protein does not inhibit transcription initiation. The polypeptide is DNA-directed RNA polymerase subunit epsilon (Geobacillus stearothermophilus (strain DSM 13240 / CIP 106956 / 10)).